Consider the following 213-residue polypeptide: Small ribosomal subunit protein uS3 (213 aa).

The KH type-2 domain occupies isoleucine 38–arginine 106.

Belongs to the universal ribosomal protein uS3 family. As to quaternary structure, part of the 30S ribosomal subunit. Forms a tight complex with proteins S10 and S14.

Functionally, binds the lower part of the 30S subunit head. Binds mRNA in the 70S ribosome, positioning it for translation. The polypeptide is Small ribosomal subunit protein uS3 (Lawsonia intracellularis (strain PHE/MN1-00)).